We begin with the raw amino-acid sequence, 216 residues long: Cytidylate kinase (216 aa).

An ATP-binding site is contributed by 9–17 (GPAASGKGT).

This sequence belongs to the cytidylate kinase family. Type 1 subfamily.

It localises to the cytoplasm. The enzyme catalyses CMP + ATP = CDP + ADP. It catalyses the reaction dCMP + ATP = dCDP + ADP. This chain is Cytidylate kinase, found in Caulobacter sp. (strain K31).